A 597-amino-acid polypeptide reads, in one-letter code: DDB1- and CUL4-associated factor 8 (597 aa).

Residues 1–24 are compositionally biased toward polar residues; the sequence is MSSKGSSTDGRTDLANGSLSSSPE. The tract at residues 1 to 147 is disordered; it reads MSSKGSSTDG…DWVSSETSAL (147 aa). Phosphoserine is present on residues Ser-21 and Ser-22. The Nuclear export signal signature appears at 39 to 50; that stretch reads IEVEASDLSLSL. Residues 65–99 are compositionally biased toward basic and acidic residues; it reads RGTDTESSGEDKDSDSMEDTGHYSINDENRVHDRS. At Ser-99 the chain carries Phosphoserine. The segment covering 100–112 has biased composition (acidic residues); the sequence is EEEEEEEEEEEEE. The Nuclear localization signal signature appears at 114-122; sequence PRRRVQRKR. Basic and acidic residues predominate over residues 124 to 137; it reads NRDQDSSDDERALE. Phosphoserine occurs at positions 129 and 130. WD repeat units follow at residues 191-230, 234-275, 281-321, 329-369, 385-424, 432-472, and 476-515; these read GHTG…PVLD, GHKS…CCKN, QHKG…PASK, EKKV…ENEN, ESKA…GAQY, RNNA…IIQF, and DKGG…STEL. Arg-204 carries the omega-N-methylarginine; by PRMT1 modification. The tract at residues 558 to 597 is disordered; the sequence is HRRWREPGVGATDADSDESPSSSDTSDEEEGPDRVQCMPS.

This sequence belongs to the WD repeat DCAF8 family. As to quaternary structure, interacts with DDB1, CUL4A and CUL4B. Interacts with KPNA1, KPNB1 and XPO1.

It is found in the nucleus. The protein resides in the cytoplasm. It functions in the pathway protein modification; protein ubiquitination. Functionally, may function as a substrate receptor for CUL4-DDB1 E3 ubiquitin-protein ligase complex. This Homo sapiens (Human) protein is DDB1- and CUL4-associated factor 8 (DCAF8).